We begin with the raw amino-acid sequence, 201 residues long: Recombination protein RecR (201 aa).

The C4-type zinc finger occupies 57-72; it reads CRSCRTFTEEDECNIC. The 96-residue stretch at 81 to 176 folds into the Toprim domain; sequence GQLCVVEMPE…KVTRIAHGIP (96 aa).

The protein belongs to the RecR family.

Functionally, may play a role in DNA repair. It seems to be involved in an RecBC-independent recombinational process of DNA repair. It may act with RecF and RecO. The chain is Recombination protein RecR from Actinobacillus pleuropneumoniae serotype 5b (strain L20).